A 62-amino-acid chain; its full sequence is MRCVPVFIILLLLIPSASSVDVQPLTRDDVPLASFLDDARRTLRSPWMTRRCCPGNFACCGK.

The signal sequence occupies residues 1-19; sequence MRCVPVFIILLLLIPSASS. A propeptide spanning residues 20–50 is cleaved from the precursor; it reads VDVQPLTRDDVPLASFLDDARRTLRSPWMTR.

The protein belongs to the conotoxin T superfamily. Contains 2 disulfide bonds that can be either 'C1-C3, C2-C4' or 'C1-C4, C2-C3', since these disulfide connectivities have been observed for conotoxins with cysteine framework V (for examples, see AC P0DQQ7 and AC P81755). As to expression, expressed by the venom duct.

Its subcellular location is the secreted. This is Conotoxin Mi5.2 from Conus miles (Soldier cone).